The following is a 319-amino-acid chain: Epoxyqueuosine reductase (319 aa).

Catalysis depends on D146, which acts as the Proton donor. Residues 188-220 (ASLPADQPARSLCGHCQRCLPACPTAAITEPFV) enclose the 4Fe-4S ferredoxin-type domain. [4Fe-4S] cluster-binding residues include C200, C203, C206, C210, C226, C250, C253, and C257.

This sequence belongs to the QueG family. In terms of assembly, monomer. Cob(II)alamin serves as cofactor. It depends on [4Fe-4S] cluster as a cofactor.

Its subcellular location is the cytoplasm. The enzyme catalyses epoxyqueuosine(34) in tRNA + AH2 = queuosine(34) in tRNA + A + H2O. Its pathway is tRNA modification; tRNA-queuosine biosynthesis. Catalyzes the conversion of epoxyqueuosine (oQ) to queuosine (Q), which is a hypermodified base found in the wobble positions of tRNA(Asp), tRNA(Asn), tRNA(His) and tRNA(Tyr). The protein is Epoxyqueuosine reductase of Synechococcus sp. (strain RCC307).